Reading from the N-terminus, the 114-residue chain is T cell receptor beta variable 25-1 (114 aa).

Positions 1 to 21 (MTIRLLCYVGFYFLGAGLMEA) are cleaved as a signal peptide. One can recognise an Ig-like domain in the interval 22–114 (DIYQTPRYLV…TSQYLCASSE (93 aa)). Cysteines 42 and 110 form a disulfide. Asparagine 72 carries N-linked (GlcNAc...) asparagine glycosylation.

As to quaternary structure, alpha-beta TR is a heterodimer composed of an alpha and beta chain; disulfide-linked. The alpha-beta TR is associated with the transmembrane signaling CD3 coreceptor proteins to form the TR-CD3 (TcR or TCR). The assembly of alpha-beta TR heterodimers with CD3 occurs in the endoplasmic reticulum where a single alpha-beta TR heterodimer associates with one CD3D-CD3E heterodimer, one CD3G-CD3E heterodimer and one CD247 homodimer forming a stable octameric structure. CD3D-CD3E and CD3G-CD3E heterodimers preferentially associate with TR alpha and TR beta chains, respectively. The association of the CD247 homodimer is the last step of TcR assembly in the endoplasmic reticulum and is required for transport to the cell surface.

It is found in the cell membrane. Its function is as follows. V region of the variable domain of T cell receptor (TR) beta chain that participates in the antigen recognition. Alpha-beta T cell receptors are antigen specific receptors which are essential to the immune response and are present on the cell surface of T lymphocytes. Recognize peptide-major histocompatibility (MH) (pMH) complexes that are displayed by antigen presenting cells (APC), a prerequisite for efficient T cell adaptive immunity against pathogens. Binding of alpha-beta TR to pMH complex initiates TR-CD3 clustering on the cell surface and intracellular activation of LCK that phosphorylates the ITAM motifs of CD3G, CD3D, CD3E and CD247 enabling the recruitment of ZAP70. In turn ZAP70 phosphorylates LAT, which recruits numerous signaling molecules to form the LAT signalosome. The LAT signalosome propagates signal branching to three major signaling pathways, the calcium, the mitogen-activated protein kinase (MAPK) kinase and the nuclear factor NF-kappa-B (NF-kB) pathways, leading to the mobilization of transcription factors that are critical for gene expression and essential for T cell growth and differentiation. The T cell repertoire is generated in the thymus, by V-(D)-J rearrangement. This repertoire is then shaped by intrathymic selection events to generate a peripheral T cell pool of self-MH restricted, non-autoaggressive T cells. Post-thymic interaction of alpha-beta TR with the pMH complexes shapes TR structural and functional avidity. This chain is T cell receptor beta variable 25-1, found in Homo sapiens (Human).